A 415-amino-acid chain; its full sequence is Tyrosine--tRNA ligase (415 aa).

The short motif at 54–63 is the 'HIGH' region element; the sequence is PTGSNIHLGH. A 'KMSKS' region motif is present at residues 248-252; that stretch reads KMSKS. Lysine 251 is an ATP binding site. In terms of domain architecture, S4 RNA-binding spans 351–415; it reads AKAFYLLSAV…GKKTFRRLTA (65 aa).

It belongs to the class-I aminoacyl-tRNA synthetase family. TyrS type 2 subfamily. In terms of assembly, homodimer.

It localises to the cytoplasm. It catalyses the reaction tRNA(Tyr) + L-tyrosine + ATP = L-tyrosyl-tRNA(Tyr) + AMP + diphosphate + H(+). Functionally, catalyzes the attachment of tyrosine to tRNA(Tyr) in a two-step reaction: tyrosine is first activated by ATP to form Tyr-AMP and then transferred to the acceptor end of tRNA(Tyr). This chain is Tyrosine--tRNA ligase, found in Parasynechococcus marenigrum (strain WH8102).